A 264-amino-acid polypeptide reads, in one-letter code: Sec-independent protein translocase protein TatC (264 aa).

Helical transmembrane passes span 20 to 40 (VVVI…EPAE), 85 to 105 (FFAQ…PVAV), 131 to 151 (AVGL…PYIL), 175 to 195 (FVLQ…VMFA), 211 to 231 (IRYA…DGSG), and 232 to 252 (VTMW…MFFA).

This sequence belongs to the TatC family. Forms a complex with TatA.

It is found in the cell membrane. Its function is as follows. Part of the twin-arginine translocation (Tat) system that transports large folded proteins containing a characteristic twin-arginine motif in their signal peptide across membranes. This Cenarchaeum symbiosum (strain A) protein is Sec-independent protein translocase protein TatC.